Consider the following 406-residue polypeptide: L-carnitine CoA-transferase (406 aa).

CoA-binding residues include Lys-98 and Arg-105. Asp-170 (nucleophile) is an active-site residue.

It belongs to the CoA-transferase III family. CaiB subfamily. In terms of assembly, homodimer.

It is found in the cytoplasm. It carries out the reaction crotonobetainyl-CoA + (R)-carnitine = crotonobetaine + (R)-carnitinyl-CoA. The catalysed reaction is 4-(trimethylamino)butanoyl-CoA + (R)-carnitine = (R)-carnitinyl-CoA + 4-(trimethylamino)butanoate. The protein operates within amine and polyamine metabolism; carnitine metabolism. Its function is as follows. Catalyzes the reversible transfer of the CoA moiety from gamma-butyrobetainyl-CoA to L-carnitine to generate L-carnitinyl-CoA and gamma-butyrobetaine. Is also able to catalyze the reversible transfer of the CoA moiety from gamma-butyrobetainyl-CoA or L-carnitinyl-CoA to crotonobetaine to generate crotonobetainyl-CoA. This is L-carnitine CoA-transferase from Proteus mirabilis (strain HI4320).